The chain runs to 197 residues: Imidazoleglycerol-phosphate dehydratase (197 aa).

Belongs to the imidazoleglycerol-phosphate dehydratase family.

Its subcellular location is the cytoplasm. It catalyses the reaction D-erythro-1-(imidazol-4-yl)glycerol 3-phosphate = 3-(imidazol-4-yl)-2-oxopropyl phosphate + H2O. It functions in the pathway amino-acid biosynthesis; L-histidine biosynthesis; L-histidine from 5-phospho-alpha-D-ribose 1-diphosphate: step 6/9. This is Imidazoleglycerol-phosphate dehydratase from Gloeobacter violaceus (strain ATCC 29082 / PCC 7421).